A 514-amino-acid polypeptide reads, in one-letter code: Maturase K (514 aa).

This sequence belongs to the intron maturase 2 family. MatK subfamily.

The protein resides in the plastid. It localises to the chloroplast. Usually encoded in the trnK tRNA gene intron. Probably assists in splicing its own and other chloroplast group II introns. The protein is Maturase K of Acer palmatum (Japanese maple).